The sequence spans 492 residues: Putative BTB/POZ domain and WD-repeat protein R786 (492 aa).

The 71-residue stretch at 16–86 (TDVEIVLIDE…FYGQIVDSTN (71 aa)) folds into the BTB domain. 2 WD repeats span residues 241-281 (QSSC…IKIK) and 286-325 (LINR…SKGI).

This sequence belongs to the mimivirus BTB/WD family.

In Acanthamoeba polyphaga (Amoeba), this protein is Putative BTB/POZ domain and WD-repeat protein R786.